We begin with the raw amino-acid sequence, 835 residues long: Lon protease (835 aa).

A Lon N-terminal domain is found at 36–234 (VHVFPLLRRP…KALILLKKEL (199 aa)). 387–394 (GPPGVGKT) provides a ligand contact to ATP. One can recognise a Lon proteolytic domain in the interval 646–828 (RTPVGVCMGL…DQVFKISFPN (183 aa)). Residues S734 and K777 contribute to the active site.

The protein belongs to the peptidase S16 family. As to quaternary structure, homohexamer. Organized in a ring with a central cavity.

It is found in the cytoplasm. It carries out the reaction Hydrolysis of proteins in presence of ATP.. Functionally, ATP-dependent serine protease that mediates the selective degradation of mutant and abnormal proteins as well as certain short-lived regulatory proteins. Required for cellular homeostasis and for survival from DNA damage and developmental changes induced by stress. Degrades polypeptides processively to yield small peptide fragments that are 5 to 10 amino acids long. Binds to DNA in a double-stranded, site-specific manner. This chain is Lon protease, found in Protochlamydia amoebophila (strain UWE25).